A 341-amino-acid chain; its full sequence is Ketol-acid reductoisomerase (NADP(+)) (341 aa).

In terms of domain architecture, KARI N-terminal Rossmann spans 2–181 (AKVYYNGDAN…GAARAGVLET (180 aa)). Residues 25–28 (YGSQ), R48, S52, and 82–85 (DEKQ) each bind NADP(+). H107 is an active-site residue. G133 is an NADP(+) binding site. The region spanning 182–327 (TFKEETETDL…RELRSMMPFV (146 aa)) is the KARI C-terminal knotted domain. Residues D190, E194, E226, and E230 each coordinate Mg(2+). S251 lines the substrate pocket.

This sequence belongs to the ketol-acid reductoisomerase family. Mg(2+) is required as a cofactor.

It carries out the reaction (2R)-2,3-dihydroxy-3-methylbutanoate + NADP(+) = (2S)-2-acetolactate + NADPH + H(+). It catalyses the reaction (2R,3R)-2,3-dihydroxy-3-methylpentanoate + NADP(+) = (S)-2-ethyl-2-hydroxy-3-oxobutanoate + NADPH + H(+). Its pathway is amino-acid biosynthesis; L-isoleucine biosynthesis; L-isoleucine from 2-oxobutanoate: step 2/4. It functions in the pathway amino-acid biosynthesis; L-valine biosynthesis; L-valine from pyruvate: step 2/4. Its function is as follows. Involved in the biosynthesis of branched-chain amino acids (BCAA). Catalyzes an alkyl-migration followed by a ketol-acid reduction of (S)-2-acetolactate (S2AL) to yield (R)-2,3-dihydroxy-isovalerate. In the isomerase reaction, S2AL is rearranged via a Mg-dependent methyl migration to produce 3-hydroxy-3-methyl-2-ketobutyrate (HMKB). In the reductase reaction, this 2-ketoacid undergoes a metal-dependent reduction by NADPH to yield (R)-2,3-dihydroxy-isovalerate. In Geobacillus kaustophilus (strain HTA426), this protein is Ketol-acid reductoisomerase (NADP(+)).